The primary structure comprises 478 residues: Cytochrome P450 family 716 subfamily AD polypeptide 4 (478 aa).

The helical transmembrane segment at 1–21 (MELFLPSVLLILTVFCFYYLF) threads the bilayer. Residue cysteine 425 participates in heme binding.

This sequence belongs to the cytochrome P450 family. Heme is required as a cofactor. In terms of tissue distribution, mainly expressed in petioles and, to a lower extent, in roots.

Its subcellular location is the membrane. The enzyme catalyses (1S,3bR,4R,5aR,9aR,9bR,11aS)-1-[(4R)-5-[(2S)-3,3-dimethyloxiran-2-yl]-1,4-dihydroxybutan-2-yl]-3b,6,6,9a,11a-pentamethyl-7-oxo-1H,2H,3bH,4H,5H,5aH,6H,7H,9aH,9bH,10H,11H,11aH-cyclopenta[a]phenanthren-4-yl acetate + reduced [NADPH--hemoprotein reductase] + O2 = (1S,3bR,4R,5aR,9aR,9bR,11aS)-1-(1-hydroxy-4-oxobutan-2-yl)-3b,6,6,9a,11a-pentamethyl-7-oxo-1H,2H,3bH,4H,5H,5aH,6H,7H,9aH,9bH,10H,11H,11aH-cyclopenta[a]phenanthren-4-yl acetate + 2-methylpropanoate + oxidized [NADPH--hemoprotein reductase] + H2O + 2 H(+). The protein operates within secondary metabolite biosynthesis; terpenoid biosynthesis. In terms of biological role, monooxygenase involved in the biosynthesis of limonoids triterpene natural products such as azadirachtin, an antifeedant widely used as bioinsecticide, and possessing many medicinal applications including anti-tumoral, anti-malarial, anti-rheumatic, antibacterial, anti-inflammatory, anti-pyretic and diuretic effects. Catalyzes the formation of (1S,3bR,4R,5aR,9aR,9bR,11aS)-1-(1-hydroxy-4-oxobutan-2-yl)-3b,6,6,9a,11a-pentamethyl-7-oxo-1H,2H,3bH,4H,5H,5aH,6H,7H,9aH,9bH,10H,11H,11aH-cyclopenta[a]phenanthren-4-yl acetate. This chain is Cytochrome P450 family 716 subfamily AD polypeptide 4, found in Melia azedarach (Chinaberry tree).